The primary structure comprises 1641 residues: Vitellogenin-1 (1641 aa).

An N-terminal signal peptide occupies residues 1–18 (MWYLAFLLIIGAYAADHA). In terms of domain architecture, Vitellogenin spans 19–790 (WETGNEYHYL…SQDTTVPKSS (772 aa)). A disulfide bond links C172 and C211. The span at 322-334 (LRQPSVSLNSMEA) shows a compositional bias: polar residues. The segment at 322–372 (LRQPSVSLNSMEARSSENSNEENRSDDDRSNFLSNSGEEREYLQSKPTLNE) is disordered. The segment covering 342 to 351 (EENRSDDDRS) has biased composition (basic and acidic residues). N-linked (GlcNAc...) asparagine glycosylation is found at N344, N549, N566, N831, N875, N898, N1001, N1053, N1268, N1393, N1396, N1505, and N1523. The region spanning 1410 to 1597 (ESVCVLDKTH…TYAMTQESCQ (188 aa)) is the VWFD domain. C1435 and C1596 are disulfide-bonded. The segment at 1594–1641 (ESCQGPAPENKRKAEQSTCMSRSYRPSDVISDREAGRSSTKNRGWGYH) is disordered.

In terms of tissue distribution, hemolymph.

The protein resides in the secreted. Functionally, precursor of the egg-yolk proteins that are sources of nutrients during embryonic development. This chain is Vitellogenin-1, found in Solenopsis invicta (Red imported fire ant).